The primary structure comprises 544 residues: Potential vesicular glutamate transporter vglu-3 (544 aa).

Residues 1–49 (MPNGSIRNCANAVADTVRQTFSRKTWEHKEQLQTITEQKKFFLRKVRWQ) are Cytoplasmic-facing. A helical transmembrane segment spans residues 50 to 70 (IAILAHFGFAISFGIRSNFGV). The Extracellular segment spans residues 71–104 (AKNRMVNNFTDAYGEVHEREFLWTGAEVGMMESS). The N-linked (GlcNAc...) asparagine glycan is linked to Asn-78. A helical transmembrane segment spans residues 105–125 (FFYGYAASQIPAGVLAAKFAP). The Cytoplasmic portion of the chain corresponds to 126–127 (NK). A helical membrane pass occupies residues 128-148 (IFMLGILVASFMNILSAISFN). Residues 149-154 (FHPYTD) are Extracellular-facing. Residues 155–175 (IFVMVVQAVQGLALGVLYPAM) form a helical membrane-spanning segment. Residues 176–193 (HGVWKFWAPPLERSKLAT) lie on the Cytoplasmic side of the membrane. The chain crosses the membrane as a helical span at residues 194–214 (TAFTGSSVGVMTGLPASAYLV). Over 215–219 (SHFSW) the chain is Extracellular. A helical transmembrane segment spans residues 220–240 (STPFYVFGVVGIIWSLIWMYV). Residues 241-285 (SSHSPETHGYISDDEKKQVTEKIGDVAVKNMSLTTLPWRDMMTSS) are Cytoplasmic-facing. A helical membrane pass occupies residues 286–306 (AVWAIIICTFCRSWGFFLLLG). The Extracellular segment spans residues 307 to 323 (NQLTYMKDVLHIDIKNS). A helical transmembrane segment spans residues 324–344 (GFISIFPQFGMCIVTLATGQL). Residues 345–360 (CDYLRSSGKMSTEAVR) are Cytoplasmic-facing. A helical membrane pass occupies residues 361–381 (KSVNTFGFTVEAMMLGCLAFV). The Extracellular portion of the chain corresponds to 382–384 (RDP). Residues 385–405 (VIAVTCLVIACTGSGSVLSGF) traverse the membrane as a helical segment. The Cytoplasmic segment spans residues 406-416 (NVNHFDIAPRY). A helical transmembrane segment spans residues 417–437 (APILMGIANGLGAVAGVGGMV). Residues 438–450 (TNTVTYQNPDGWK) are Extracellular-facing. Residues 451–471 (WVFLLAMAIDIFGVIFFLIFA) form a helical membrane-spanning segment. Topologically, residues 472-544 (KGDVLPWARE…APAEKSESSS (73 aa)) are cytoplasmic. Residues 501 to 544 (SLSRKTRNREGDTSYEKMEEDSEMKPCSKKVEARAPAEKSESSS) are disordered. The segment covering 508–544 (NREGDTSYEKMEEDSEMKPCSKKVEARAPAEKSESSS) has biased composition (basic and acidic residues).

This sequence belongs to the major facilitator superfamily. Sodium/anion cotransporter family. VGLUT subfamily.

Its subcellular location is the membrane. The protein is Potential vesicular glutamate transporter vglu-3 (vglu-3) of Caenorhabditis elegans.